The chain runs to 811 residues: Mitochondrial intermediate peptidase (811 aa).

Residues 1–25 constitute a mitochondrion transit peptide; sequence MRSGSRLSNYLVRLSGRVSFTQKRS. The interval 423–450 is disordered; sequence TENGEKASTDTSTSTTTSTTTTDSTTTT. Positions 431–450 are enriched in low complexity; that stretch reads TDTSTSTTTSTTTTDSTTTT. His593 serves as a coordination point for Zn(2+). The active site involves Glu594. Zn(2+) is bound by residues His597 and His600.

Belongs to the peptidase M3 family. Zn(2+) is required as a cofactor.

Its subcellular location is the mitochondrion matrix. The catalysed reaction is Release of an N-terminal octapeptide as second stage of processing of some proteins imported into the mitochondrion.. In terms of biological role, cleaves proteins, imported into the mitochondrion, to their mature size. While most mitochondrial precursor proteins are processed to the mature form in one step by mitochondrial processing peptidase (MPP), the sequential cleavage by MIP of an octapeptide after initial processing by MPP is a required step for a subgroup of nuclear-encoded precursor proteins destined for the matrix or the inner membrane. The protein is Mitochondrial intermediate peptidase (OCT1) of Lodderomyces elongisporus (strain ATCC 11503 / CBS 2605 / JCM 1781 / NBRC 1676 / NRRL YB-4239) (Yeast).